A 180-amino-acid polypeptide reads, in one-letter code: Inner membrane-spanning protein YciB (180 aa).

The next 6 membrane-spanning stretches (helical) occupy residues 4 to 24 (LLSE…GGGI), 25 to 45 (QSAT…CYII), 49 to 69 (VSKL…ITLI), 76 to 96 (IKIK…MSGI), 118 to 138 (IILS…NEVV), and 150 to 170 (FKVF…LPLL).

The protein belongs to the YciB family.

The protein resides in the cell inner membrane. Its function is as follows. Plays a role in cell envelope biogenesis, maintenance of cell envelope integrity and membrane homeostasis. The protein is Inner membrane-spanning protein YciB of Rickettsia typhi (strain ATCC VR-144 / Wilmington).